The following is a 409-amino-acid chain: Broad specificity amino-acid racemase (409 aa).

A signal peptide spans 1–25 (MRLKKTLLSIAIAAATFTPAMHSIA). A disulfide bridge connects residues C72 and C98. The active-site Proton acceptor is K76. The residue at position 76 (K76) is an N6-(pyridoxal phosphate)lysine. R175 is a binding site for substrate. Catalysis depends on Y301, which acts as the Proton acceptor. M349 is a substrate binding site.

This sequence belongs to the alanine racemase family. Bsr subfamily. The cofactor is pyridoxal 5'-phosphate.

The protein localises to the periplasm. It catalyses the reaction an L-alpha-amino acid = a D-alpha-amino acid. The catalysed reaction is L-lysine = D-lysine. It carries out the reaction L-arginine = D-arginine. In terms of biological role, amino-acid racemase able to utilize a broad range of substrates. This chain is Broad specificity amino-acid racemase, found in Vibrio parahaemolyticus serotype O3:K6 (strain RIMD 2210633).